Here is a 133-residue protein sequence, read N- to C-terminus: ATP synthase epsilon chain, chloroplastic (133 aa).

It belongs to the ATPase epsilon chain family. As to quaternary structure, F-type ATPases have 2 components, CF(1) - the catalytic core - and CF(0) - the membrane proton channel. CF(1) has five subunits: alpha(3), beta(3), gamma(1), delta(1), epsilon(1). CF(0) has three main subunits: a, b and c.

Its subcellular location is the plastid. The protein resides in the chloroplast thylakoid membrane. Functionally, produces ATP from ADP in the presence of a proton gradient across the membrane. This Nicotiana sylvestris (Wood tobacco) protein is ATP synthase epsilon chain, chloroplastic.